A 387-amino-acid chain; its full sequence is Eukaryotic translation initiation factor 3 subunit M (387 aa).

A PCI domain is found at 181–340 (LSSKVMIELL…RKVHISSTMH (160 aa)).

It belongs to the eIF-3 subunit M family. In terms of assembly, component of the eukaryotic translation initiation factor 3 (eIF-3) complex. The eIF-3 complex interacts with pix.

The protein localises to the cytoplasm. It localises to the golgi apparatus. Its function is as follows. Component of the eukaryotic translation initiation factor 3 (eIF-3) complex, which is involved in protein synthesis of a specialized repertoire of mRNAs and, together with other initiation factors, stimulates binding of mRNA and methionyl-tRNAi to the 40S ribosome. The eIF-3 complex specifically targets and initiates translation of a subset of mRNAs involved in cell proliferation. In Drosophila ananassae (Fruit fly), this protein is Eukaryotic translation initiation factor 3 subunit M.